The sequence spans 562 residues: Potassium-transporting ATPase potassium-binding subunit (562 aa).

10 consecutive transmembrane segments (helical) span residues Ala-5–Ser-25, Ala-63–Ala-83, Gly-132–Ile-152, Leu-175–Leu-195, Leu-250–Phe-270, Gln-279–Met-299, Gly-379–Gly-399, Met-416–Leu-436, Val-483–Ile-503, and Leu-526–Ala-546.

The protein belongs to the KdpA family. The system is composed of three essential subunits: KdpA, KdpB and KdpC.

It localises to the cell inner membrane. Functionally, part of the high-affinity ATP-driven potassium transport (or Kdp) system, which catalyzes the hydrolysis of ATP coupled with the electrogenic transport of potassium into the cytoplasm. This subunit binds the periplasmic potassium ions and delivers the ions to the membrane domain of KdpB through an intramembrane tunnel. This Pectobacterium atrosepticum (strain SCRI 1043 / ATCC BAA-672) (Erwinia carotovora subsp. atroseptica) protein is Potassium-transporting ATPase potassium-binding subunit.